We begin with the raw amino-acid sequence, 108 residues long: NADH dehydrogenase [ubiquinone] flavoprotein 3, mitochondrial (108 aa).

A mitochondrion-targeting transit peptide spans 1 to 34 (MAASCLLRQGRAGALKTMLQEAQVFRGLASTVSL). The segment at 33-72 (SLSAESGKSEKGQPQNSKKQSPPKKPAPVPAEPFDNSTYK) is disordered. Ser105 is modified (phosphoserine).

Belongs to the complex I NDUFV3 subunit family. Complex I is composed of 45 different subunits. This is a component of the flavoprotein-sulfur (FP) fragment of the enzyme.

The protein localises to the mitochondrion inner membrane. Accessory subunit of the mitochondrial membrane respiratory chain NADH dehydrogenase (Complex I), that is believed not to be involved in catalysis. Complex I functions in the transfer of electrons from NADH to the respiratory chain. The immediate electron acceptor for the enzyme is believed to be ubiquinone. May be the terminally assembled subunit of Complex I. In Gorilla gorilla gorilla (Western lowland gorilla), this protein is NADH dehydrogenase [ubiquinone] flavoprotein 3, mitochondrial (NDUFV3).